A 462-amino-acid chain; its full sequence is UDP-N-acetylmuramate--L-alanine ligase (462 aa).

112 to 118 (GTHGKTT) serves as a coordination point for ATP.

This sequence belongs to the MurCDEF family.

Its subcellular location is the cytoplasm. It carries out the reaction UDP-N-acetyl-alpha-D-muramate + L-alanine + ATP = UDP-N-acetyl-alpha-D-muramoyl-L-alanine + ADP + phosphate + H(+). It functions in the pathway cell wall biogenesis; peptidoglycan biosynthesis. Its function is as follows. Cell wall formation. In Geobacter sulfurreducens (strain ATCC 51573 / DSM 12127 / PCA), this protein is UDP-N-acetylmuramate--L-alanine ligase.